A 458-amino-acid polypeptide reads, in one-letter code: ATP synthase subunit beta (458 aa).

147–154 (GGAGVGKT) lines the ATP pocket.

This sequence belongs to the ATPase alpha/beta chains family. F-type ATPases have 2 components, CF(1) - the catalytic core - and CF(0) - the membrane proton channel. CF(1) has five subunits: alpha(3), beta(3), gamma(1), delta(1), epsilon(1). CF(0) has three main subunits: a(1), b(2) and c(9-12). The alpha and beta chains form an alternating ring which encloses part of the gamma chain. CF(1) is attached to CF(0) by a central stalk formed by the gamma and epsilon chains, while a peripheral stalk is formed by the delta and b chains.

The protein localises to the cell inner membrane. It carries out the reaction ATP + H2O + 4 H(+)(in) = ADP + phosphate + 5 H(+)(out). Produces ATP from ADP in the presence of a proton gradient across the membrane. The catalytic sites are hosted primarily by the beta subunits. This chain is ATP synthase subunit beta, found in Chromohalobacter salexigens (strain ATCC BAA-138 / DSM 3043 / CIP 106854 / NCIMB 13768 / 1H11).